A 258-amino-acid polypeptide reads, in one-letter code: D-beta-hydroxybutyrate dehydrogenase (258 aa).

Position 8 to 32 (8 to 32 (LVTGSTSGIGLGIAKALAAQGANII)) interacts with NAD(+). Serine 140 serves as a coordination point for substrate. The active-site Proton acceptor is the tyrosine 153.

This sequence belongs to the short-chain dehydrogenases/reductases (SDR) family.

The catalysed reaction is (R)-3-hydroxybutanoate + NAD(+) = acetoacetate + NADH + H(+). In Cupriavidus necator (strain ATCC 17699 / DSM 428 / KCTC 22496 / NCIMB 10442 / H16 / Stanier 337) (Ralstonia eutropha), this protein is D-beta-hydroxybutyrate dehydrogenase (hbdH1).